A 131-amino-acid chain; its full sequence is Histone H2A-beta (131 aa).

Serine 2 carries the N-acetylserine modification. Residues lysine 5 and lysine 9 each carry the N6-acetyllysine modification. At glutamine 106 the chain carries N5-methylglutamine. Serine 128 is modified (phosphoserine). A [ST]-Q motif motif is present at residues 128-129; sequence SQ.

The protein belongs to the histone H2A family. As to quaternary structure, the nucleosome is a histone octamer containing two molecules each of H2A, H2B, H3 and H4 assembled in one H3-H4 heterotetramer and two H2A-H2B heterodimers. The octamer wraps approximately 147 bp of DNA. Phosphorylated to form H2AS128ph (gamma-H2A) in response to DNA double-strand breaks (DSBs) generated by exogenous genotoxic agents and by stalled replication forks. Phosphorylation is dependent on the DNA damage checkpoint kinases rad3/ATR and tel1/ATM, spreads on either side of a detected DSB site and may mark the surrounding chromatin for recruitment of proteins required for DNA damage signaling and repair. Gamma-H2A is required for recruiting crb2, a modulator of DNA damage checkpoint signaling, to DSB sites. Gamma-H2A is removed from the DNA prior to the strand invasion-primer extension step of the repair process and subsequently dephosphorylated. Dephosphorylation is necessary for efficient recovery from the DNA damage checkpoint. In terms of processing, acetylated by esa1 to form H2AK4ac and H2AK7ac.

Its subcellular location is the nucleus. It is found in the chromosome. Functionally, core component of nucleosome which plays a central role in DNA double strand break (DSB) repair. Nucleosomes wrap and compact DNA into chromatin, limiting DNA accessibility to the cellular machineries which require DNA as a template. Histones thereby play a central role in transcription regulation, DNA repair, DNA replication and chromosomal stability. DNA accessibility is regulated via a complex set of post-translational modifications of histones, also called histone code, and nucleosome remodeling. The sequence is that of Histone H2A-beta (hta2) from Schizosaccharomyces pombe (strain 972 / ATCC 24843) (Fission yeast).